The following is a 233-amino-acid chain: Large ribosomal subunit protein eL6z (233 aa).

A disordered region spans residues 175-195; it reads EFFEAEKEEKKEIPQEKKEDQ.

It belongs to the eukaryotic ribosomal protein eL6 family.

This chain is Large ribosomal subunit protein eL6z (RPL6A), found in Arabidopsis thaliana (Mouse-ear cress).